Reading from the N-terminus, the 320-residue chain is Cytosolic Fe-S cluster assembly factor NUBP1 (320 aa).

The residue at position 1 (M1) is an N-acetylmethionine. 4 residues coordinate [4Fe-4S] cluster: C8, C22, C25, and C31. 62–69 provides a ligand contact to ATP; sequence GKGGVGKS. The [4Fe-4S] cluster site is built by C235 and C238.

It belongs to the Mrp/NBP35 ATP-binding proteins family. NUBP1/NBP35 subfamily. In terms of assembly, heterotetramer of 2 NUBP1 and 2 NUBP2 chains. Interacts with KIFC1. Interacts with the BBS/CCT complex subunit CCT1. [4Fe-4S] cluster is required as a cofactor.

It is found in the cytoplasm. The protein localises to the nucleus. Its subcellular location is the cell projection. The protein resides in the cytoskeleton. It localises to the cilium axoneme. It is found in the cilium basal body. The protein localises to the microtubule organizing center. Its subcellular location is the centrosome. The protein resides in the centriole. Component of the cytosolic iron-sulfur (Fe/S) protein assembly (CIA) machinery. Required for maturation of extramitochondrial Fe-S proteins. The NUBP1-NUBP2 heterotetramer forms a Fe-S scaffold complex, mediating the de novo assembly of an Fe-S cluster and its transfer to target apoproteins. Implicated in the regulation of centrosome duplication. Negatively regulates cilium formation and structure. This is Cytosolic Fe-S cluster assembly factor NUBP1 from Bos taurus (Bovine).